The following is a 432-amino-acid chain: Glutamate-1-semialdehyde 2,1-aminomutase 1 (432 aa).

Lys-268 is modified (N6-(pyridoxal phosphate)lysine).

The protein belongs to the class-III pyridoxal-phosphate-dependent aminotransferase family. HemL subfamily. Homodimer. It depends on pyridoxal 5'-phosphate as a cofactor.

It localises to the cytoplasm. It carries out the reaction (S)-4-amino-5-oxopentanoate = 5-aminolevulinate. It functions in the pathway porphyrin-containing compound metabolism; protoporphyrin-IX biosynthesis; 5-aminolevulinate from L-glutamyl-tRNA(Glu): step 2/2. The chain is Glutamate-1-semialdehyde 2,1-aminomutase 1 from Bacillus licheniformis (strain ATCC 14580 / DSM 13 / JCM 2505 / CCUG 7422 / NBRC 12200 / NCIMB 9375 / NCTC 10341 / NRRL NRS-1264 / Gibson 46).